The primary structure comprises 378 residues: Chaperone protein DnaJ 1 (378 aa).

The region spanning 4 to 68 (DYYGILGVDR…DKRRIVDMGG (65 aa)) is the J domain. The segment at 129–211 (GVKKDLTLDT…CAGDGRVRAR (83 aa)) adopts a CR-type zinc-finger fold. Zn(2+) contacts are provided by Cys-142, Cys-145, Cys-159, Cys-162, Cys-185, Cys-188, Cys-199, and Cys-202. CXXCXGXG motif repeat units follow at residues 142 to 149 (CSKCHGSG), 159 to 166 (CGTCHGSG), 185 to 192 (CHTCNGTG), and 199 to 206 (CDECAGDG).

Belongs to the DnaJ family. Homodimer. Zn(2+) is required as a cofactor.

The protein resides in the cytoplasm. Functionally, participates actively in the response to hyperosmotic and heat shock by preventing the aggregation of stress-denatured proteins and by disaggregating proteins, also in an autonomous, DnaK-independent fashion. Unfolded proteins bind initially to DnaJ; upon interaction with the DnaJ-bound protein, DnaK hydrolyzes its bound ATP, resulting in the formation of a stable complex. GrpE releases ADP from DnaK; ATP binding to DnaK triggers the release of the substrate protein, thus completing the reaction cycle. Several rounds of ATP-dependent interactions between DnaJ, DnaK and GrpE are required for fully efficient folding. Also involved, together with DnaK and GrpE, in the DNA replication of plasmids through activation of initiation proteins. The sequence is that of Chaperone protein DnaJ 1 from Corynebacterium efficiens (strain DSM 44549 / YS-314 / AJ 12310 / JCM 11189 / NBRC 100395).